Consider the following 270-residue polypeptide: 4-hydroxy-tetrahydrodipicolinate reductase (270 aa).

Residue 7-12 (GVSGRM) participates in NAD(+) binding. Arg-34 contributes to the NADP(+) binding site. NAD(+) contacts are provided by residues 97–99 (GTT) and 121–124 (SGNM). Catalysis depends on His-155, which acts as the Proton donor/acceptor. Residue His-156 coordinates (S)-2,3,4,5-tetrahydrodipicolinate. The active-site Proton donor is Lys-159. 165 to 166 (GT) is a binding site for (S)-2,3,4,5-tetrahydrodipicolinate.

The protein belongs to the DapB family.

It localises to the cytoplasm. It catalyses the reaction (S)-2,3,4,5-tetrahydrodipicolinate + NAD(+) + H2O = (2S,4S)-4-hydroxy-2,3,4,5-tetrahydrodipicolinate + NADH + H(+). The catalysed reaction is (S)-2,3,4,5-tetrahydrodipicolinate + NADP(+) + H2O = (2S,4S)-4-hydroxy-2,3,4,5-tetrahydrodipicolinate + NADPH + H(+). The protein operates within amino-acid biosynthesis; L-lysine biosynthesis via DAP pathway; (S)-tetrahydrodipicolinate from L-aspartate: step 4/4. Functionally, catalyzes the conversion of 4-hydroxy-tetrahydrodipicolinate (HTPA) to tetrahydrodipicolinate. In Allorhizobium ampelinum (strain ATCC BAA-846 / DSM 112012 / S4) (Agrobacterium vitis (strain S4)), this protein is 4-hydroxy-tetrahydrodipicolinate reductase.